The following is a 171-amino-acid chain: 3-hydroxydecanoyl-[acyl-carrier-protein] dehydratase (171 aa).

His70 is a catalytic residue.

The protein belongs to the thioester dehydratase family. FabA subfamily. In terms of assembly, homodimer.

Its subcellular location is the cytoplasm. The enzyme catalyses a (3R)-hydroxyacyl-[ACP] = a (2E)-enoyl-[ACP] + H2O. The catalysed reaction is (3R)-hydroxydecanoyl-[ACP] = (2E)-decenoyl-[ACP] + H2O. It carries out the reaction (2E)-decenoyl-[ACP] = (3Z)-decenoyl-[ACP]. Its pathway is lipid metabolism; fatty acid biosynthesis. Its function is as follows. Necessary for the introduction of cis unsaturation into fatty acids. Catalyzes the dehydration of (3R)-3-hydroxydecanoyl-ACP to E-(2)-decenoyl-ACP and then its isomerization to Z-(3)-decenoyl-ACP. Can catalyze the dehydratase reaction for beta-hydroxyacyl-ACPs with saturated chain lengths up to 16:0, being most active on intermediate chain length. The chain is 3-hydroxydecanoyl-[acyl-carrier-protein] dehydratase from Colwellia psychrerythraea (strain 34H / ATCC BAA-681) (Vibrio psychroerythus).